The sequence spans 196 residues: Regulator of G-protein signaling 8 (196 aa).

A Phosphoserine modification is found at Ser26. An RGS domain is found at 72 to 188 (SFDVLLSHKY…LRSKMYLDLL (117 aa)).

As to quaternary structure, interacts with GNAO1 and GNAI3.

The protein resides in the cell membrane. It is found in the membrane. The protein localises to the perikaryon. Its subcellular location is the cell projection. It localises to the dendrite. The protein resides in the nucleus. Functionally, regulates G protein-coupled receptor signaling cascades, including signaling via muscarinic acetylcholine receptor CHRM2 and dopamine receptor DRD2. Inhibits signal transduction by increasing the GTPase activity of G protein alpha subunits, thereby driving them into their inactive GDP-bound form. Modulates the activity of potassium channels that are activated in response to DRD2 and CHRM2 signaling. In Macaca fascicularis (Crab-eating macaque), this protein is Regulator of G-protein signaling 8 (RGS8).